Reading from the N-terminus, the 816-residue chain is Probable transcriptional regulator SLK2 (816 aa).

2 disordered regions span residues 133–153 and 166–189; these read HDPS…SQTN and SFFQ…KQDD. Polar residues-rich tracts occupy residues 139-153 and 166-176; these read LGGS…SQTN and SFFQDPNNLTQ. The dimerization stretch occupies residues 307–554; sequence PSESSIVYWR…DQKVGPIEAL (248 aa). The short motif at 316-330 is the Nuclear localization signal element; that stretch reads RKFVTEYFSPRAKKR. 2 stretches are compositionally biased toward polar residues: residues 644 to 662 and 672 to 711; these read IQQE…QGTS and PSIS…SGNQ. Positions 644 to 711 are disordered; that stretch reads IQQEPSRNRS…QPPSCSSGNQ (68 aa).

This sequence belongs to the adn1/SEU family. As to quaternary structure, forms corepressor complexes with LUH; LUH is the transcription repressor subunit and SLK2 the specific DNA-binding adapters. In terms of tissue distribution, expressed in young flower meristems, ovules and the carpel margin meristem.

The protein localises to the nucleus. Probable transcription regulator that functions in the development of the carpel margin meristem similarly to SEUSS (SEU). In association with SEU, supports organ development from meristematic regions by facilitating auxin response and thus organ initiation, and by sustaining meristematic potential through the maintenance of PHABULOSA expression. DNA-binding adapter subunit of the SEU-SLK2 transcriptional corepressor of abiotic stress (e.g. salt and osmotic stress) response genes. The protein is Probable transcriptional regulator SLK2 (SLK2) of Arabidopsis thaliana (Mouse-ear cress).